Here is a 327-residue protein sequence, read N- to C-terminus: Interleukin-12 subunit beta (327 aa).

A signal peptide spans 1–22 (MHPQQLVVSWFSLVLLASPIVA). An Ig-like C2-type domain is found at 23-106 (IWELEKNVYV…LSRSLLLLHK (84 aa)). Cysteine 50 and cysteine 90 form a disulfide bridge. Residue asparagine 223 is glycosylated (N-linked (GlcNAc...) asparagine). One can recognise a Fibronectin type-III domain in the interval 238–327 (PPKNLQLRPL…WSEWASVSCS (90 aa)).

This sequence belongs to the IL-12B family. In terms of assembly, heterodimer with IL12A; disulfide-linked. The heterodimer is known as interleukin IL-12. Heterodimer with IL23A; disulfide-linked. The heterodimer is known as interleukin IL-23. Also secreted as a monomer. Interacts with NBR1; this interaction promotes IL-12 secretion.

It localises to the secreted. Cytokine that can act as a growth factor for activated T and NK cells, enhance the lytic activity of NK/lymphokine-activated killer cells, and stimulate the production of IFN-gamma by resting PBMC. Functionally, associates with IL23A to form the IL-23 interleukin, a heterodimeric cytokine which functions in innate and adaptive immunity. IL-23 may constitute with IL-17 an acute response to infection in peripheral tissues. IL-23 binds to a heterodimeric receptor complex composed of IL12RB1 and IL23R, activates the Jak-Stat signaling cascade, stimulates memory rather than naive T-cells and promotes production of pro-inflammatory cytokines. IL-23 induces autoimmune inflammation and thus may be responsible for autoimmune inflammatory diseases and may be important for tumorigenesis. This is Interleukin-12 subunit beta (IL12B) from Capra hircus (Goat).